A 161-amino-acid chain; its full sequence is Nucleotide-binding protein Bphyt_3208 (161 aa).

The protein belongs to the YajQ family.

Its function is as follows. Nucleotide-binding protein. The protein is Nucleotide-binding protein Bphyt_3208 of Paraburkholderia phytofirmans (strain DSM 17436 / LMG 22146 / PsJN) (Burkholderia phytofirmans).